The sequence spans 65 residues: Small ribosomal subunit protein eS31 (65 aa).

Zn(2+) is bound by residues cysteine 36, cysteine 39, cysteine 55, and cysteine 58. A C4-type zinc finger spans residues 36 to 58 (CPKCGSVMAFHREPVPRWHCGKC).

It belongs to the eukaryotic ribosomal protein eS31 family. As to quaternary structure, part of the 30S ribosomal subunit. Requires Zn(2+) as cofactor.

This chain is Small ribosomal subunit protein eS31, found in Pyrobaculum calidifontis (strain DSM 21063 / JCM 11548 / VA1).